Here is a 199-residue protein sequence, read N- to C-terminus: Inner membrane protein E199L (199 aa).

N131 carries N-linked (GlcNAc...) asparagine; by host glycosylation. Residues 150-170 (INVMNHPFLTLILIILILIII) traverse the membrane as a helical segment.

Belongs to the asfivirus E199L family. In terms of assembly, interacts with host PYCR2; this interaction results in autophagy activation. Contains intramolecular disulfide bonds.

Its subcellular location is the virion membrane. It is found in the host membrane. Its function is as follows. Essential for viral fusion with host endosomal membrane and core release. Not required for virus morphogenesis and egress. Induces complete autophagy through the interaction with and down-regulation of host PYCR2. The protein is Inner membrane protein E199L of African swine fever virus (isolate Tick/South Africa/Pretoriuskop Pr4/1996) (ASFV).